Reading from the N-terminus, the 86-residue chain is Small ribosomal subunit protein bS16 (86 aa).

Belongs to the bacterial ribosomal protein bS16 family.

The polypeptide is Small ribosomal subunit protein bS16 (Legionella pneumophila (strain Paris)).